We begin with the raw amino-acid sequence, 359 residues long: Type-1 angiotensin II receptor A (359 aa).

The Extracellular portion of the chain corresponds to 1 to 25; sequence MALNSSTEDGIKRIQDDCPRAGRHS. Residue Asn4 is glycosylated (N-linked (GlcNAc...) asparagine). Angiotensin II contacts are provided by Gln15 and Asp17. 2 disulfides stabilise this stretch: Cys18–Cys274 and Cys101–Cys180. A helical transmembrane segment spans residues 26 to 55; it reads YIFVMIPTLYSIIFVVGIFGNSLVVIVIYF. Over 56–61 the chain is Cytoplasmic; sequence YMKLKT. The chain crosses the membrane as a helical span at residues 62–89; that stretch reads VASVFLLNLALADLCFLLTLPLWAVYTA. The Extracellular segment spans residues 90–98; that stretch reads MEYRWPFGN. The helical transmembrane segment at 99 to 125 threads the bilayer; sequence HLCKIASASVSFNLYASVFLLTCLSID. Topologically, residues 126-141 are cytoplasmic; that stretch reads RYLAIVHPMKSRLRRT. A helical transmembrane segment spans residues 142–165; the sequence is MLVAKVTCIIIWLMAGLASLPAVI. Residues 166–190 are Extracellular-facing; that stretch reads HRNVYFIENTNITVCAFHYESRNST. Arg167 serves as a coordination point for angiotensin II. Residue Asn176 is glycosylated (N-linked (GlcNAc...) asparagine). Residues Phe182, His183, and Tyr184 each contribute to the angiotensin II site. Asn188 carries N-linked (GlcNAc...) asparagine glycosylation. The helical transmembrane segment at 191–216 threads the bilayer; that stretch reads LPIGLGLTKNILGFLFPFLIILTSYT. Residue Lys199 coordinates angiotensin II. Residues 217 to 239 lie on the Cytoplasmic side of the membrane; it reads LIWKALKKAYEIQKNKPRNDDIF. A helical transmembrane segment spans residues 240–268; sequence RIIMAIVLFFFFSWVPHQIFTFLDVLIQL. At 269–278 the chain is on the extracellular side; it reads GVIHDCKIAD. Residues 279–304 traverse the membrane as a helical segment; that stretch reads IVDTAMPITICIAYFNNCLNPLFYGF. Residues 305–359 lie on the Cytoplasmic side of the membrane; that stretch reads LGKKFKKYFLQLLKYIPPKAKSHSSLSTKMSTLSYRPSDNMSSAAKKPASCSEVE. The segment covering 335 to 347 has biased composition (polar residues); that stretch reads STLSYRPSDNMSS. Positions 335–359 are disordered; it reads STLSYRPSDNMSSAAKKPASCSEVE. Cys355 carries the S-palmitoyl cysteine lipid modification.

The protein belongs to the G-protein coupled receptor 1 family. Interacts with MAS1. Interacts with ARRB1. Interacts with FLNA (via filamin repeat 21); increases PKA-mediated phosphorylation of FLNA. Post-translationally, C-terminal Ser or Thr residues may be phosphorylated.

The protein resides in the cell membrane. Receptor for angiotensin II, a vasoconstricting peptide, which acts as a key regulator of blood pressure and sodium retention by the kidney. The activated receptor in turn couples to G-alpha proteins G(q) (GNAQ, GNA11, GNA14 or GNA15) and thus activates phospholipase C and increases the cytosolic Ca(2+) concentrations, which in turn triggers cellular responses such as stimulation of protein kinase C. This is Type-1 angiotensin II receptor A (Agtr1a) from Mus musculus (Mouse).